The following is a 104-amino-acid chain: Iron-sulfur cluster assembly protein CyaY (104 aa).

This sequence belongs to the frataxin family.

Involved in iron-sulfur (Fe-S) cluster assembly. May act as a regulator of Fe-S biogenesis. The sequence is that of Iron-sulfur cluster assembly protein CyaY from Tolumonas auensis (strain DSM 9187 / NBRC 110442 / TA 4).